Consider the following 189-residue polypeptide: MATPSSLWLGLALLGTLGVLQTPAQASLQPNFQEDKFLGRWFTSGLASNSSWFLEKKKVLSMCKSLVAPAPDGGFNLTSTFLRKDQCVTRTLMLRPAGPPGCYSYTSPHGGSNLEVSVVETDYKNYALLHTESGPSPGPAFRMATLYSRSQAPGAAVREKFTAFAKARGFTEDGIVFLPRNEKCLEEHE.

The signal sequence occupies residues 1-24 (MATPSSLWLGLALLGTLGVLQTPA). Q25 carries the pyrrolidone carboxylic acid modification. The N-linked (GlcNAc...) asparagine glycan is linked to N49. Catalysis depends on C63, which acts as the Nucleophile. N-linked (GlcNAc...) asparagine glycosylation occurs at N76. Residues C87 and C184 are joined by a disulfide bond.

Belongs to the calycin superfamily. Lipocalin family. As to quaternary structure, monomer. In terms of tissue distribution, abundant in the brain and CNS, where it is expressed in tissues of the blood-brain barrier and secreted into the cerebro-spinal fluid.

It localises to the rough endoplasmic reticulum. The protein resides in the nucleus membrane. The protein localises to the golgi apparatus. Its subcellular location is the cytoplasm. It is found in the perinuclear region. It localises to the secreted. It carries out the reaction prostaglandin H2 = prostaglandin D2. In terms of biological role, catalyzes the conversion of PGH2 to PGD2, a prostaglandin involved in smooth muscle contraction/relaxation and a potent inhibitor of platelet aggregation. Involved in a variety of CNS functions, such as sedation, NREM sleep and PGE2-induced allodynia, and may have an anti-apoptotic role in oligodendrocytes. Binds small non-substrate lipophilic molecules, including biliverdin, bilirubin, retinal, retinoic acid and thyroid hormone, and may act as a scavenger for harmful hydrophobic molecules and as a secretory retinoid and thyroid hormone transporter. Possibly involved in development and maintenance of the blood-brain, blood-retina, blood-aqueous humor and blood-testis barrier. It is likely to play important roles in both maturation and maintenance of the central nervous system and male reproductive system. Involved in PLA2G3-dependent maturation of mast cells. PLA2G3 is secreted by immature mast cells and acts on nearby fibroblasts upstream to PTDGS to synthesize PGD2, which in turn promotes mast cell maturation and degranulation via PTGDR. The protein is Prostaglandin-H2 D-isomerase (PTGDS) of Sus scrofa (Pig).